A 1050-amino-acid polypeptide reads, in one-letter code: MDS1 and EVI1 complex locus protein EVI1-B (1050 aa).

C2H2-type zinc fingers lie at residues 21–48, 75–97, and 103–125; these read YHCEECDQLFESKTELSNHQKYSCGTPH, HECKECDQVFPDMQSLEKHLLSH, and YKCDQCPKAFNWKSNLIRHQMSH. A C2H2-type 4; degenerate zinc finger spans residues 131–155; that stretch reads YECENCSKQVFTDPSNLQRHIRSQH. 2 consecutive C2H2-type zinc fingers follow at residues 161-183 and 189-211; these read HACSECGKTFATSSGLKQHKHIH and FVCEVCHKSYTQFSNLCRHKRMH. A C2H2-type 7; atypical zinc finger spans residues 218–240; it reads IKCKDCGQMFSTTSSLNKHRRFC. Disordered regions lie at residues 371-421 and 529-612; these read ITEN…SDKD and PLKV…EKKD. Residues 379–390 are compositionally biased toward basic and acidic residues; sequence RPHEKVSDHSES. Residues 397 to 411 show a composition bias toward polar residues; sequence STPSGSDLETTSGSD. Positions 420–433 match the Nuclear localization signal motif; the sequence is KDKLKENGKLYKDK. Residues 529–542 show a composition bias toward basic and acidic residues; sequence PLKVEPESPKESKK. Positions 551-555 match the CTBP-binding motif 1 motif; that stretch reads AFDLT. Low complexity predominate over residues 564-576; that stretch reads SPNAPSKSSAPTS. Positions 582–586 match the CTBP-binding motif 2 motif; it reads PLDLS. Over residues 588-598 the composition is skewed to polar residues; it reads GSRSRATTTKQ. Basic and acidic residues predominate over residues 599 to 612; it reads TESRKNHIFGEKKD. 3 consecutive C2H2-type zinc fingers follow at residues 731-753, 759-782, and 788-810; these read YTCRYCGKIFPRSANLTRHLRTH, YRCKYCDRSFSISSNLQRHIRNIH, and FKCHLCDRCFGQQTNLDRHLKKH. The disordered stretch occupies residues 928–951; it reads KSEVNCKVSPSRHDDDDDDEEEDF.

As to quaternary structure, homooligomer. Interacts with ctbp.

The protein localises to the nucleus. It localises to the nucleus speckle. Transcriptional repressor during pronephros development. Plays a role in regionalization of the pronephros; may promote formation of the distal tubule and duct over formation of the glomus and proximal tubule. The polypeptide is MDS1 and EVI1 complex locus protein EVI1-B (mecom-b) (Xenopus laevis (African clawed frog)).